We begin with the raw amino-acid sequence, 577 residues long: Outer spore wall assembly protein SHE10 (577 aa).

Positions 1–23 (MGKLIKLITTLTVLVSLLQYCCE) are cleaved as a signal peptide. 2 coiled-coil regions span residues 379–416 (NETRSTLDELTNAMEKDLSEITDEIEKKVNAIREENVE) and 513–561 (ILRS…EEDV). A compositionally biased stretch (basic and acidic residues) spans 525-545 (RERKERERKEREKAAAEEFQR). The disordered stretch occupies residues 525–577 (RERKERERKEREKAAAEEFQRQQELLRQQEEEDEEDVSYTSTSTITTTTTMTL). The segment covering 562-577 (SYTSTSTITTTTTMTL) has biased composition (low complexity).

This sequence belongs to the SHE10 family. In terms of assembly, component of the mitochondria-localized RNase mitochondrial RNA-processing (RNase MRP) composed of one single RNA encoded by the NME1 gene and at least 31 proteins. Absent in the nucleus-localized RNase MRP (NuMRP).

The protein resides in the mitochondrion. Involved in spore wall assembly. May be a component of the mitochondrial RNase MRP (MtMRP), a ribonucleoprotein endoribonuclease involved in the cleaving RNA transcripts to generate primers for DNA replication in mitochondria. The chain is Outer spore wall assembly protein SHE10 from Saccharomyces cerevisiae (strain YJM789) (Baker's yeast).